The primary structure comprises 760 residues: Formate acetyltransferase 1 (760 aa).

Residues 3–625 (ELNEKLATAW…KTGNTPDGRR (623 aa)) enclose the PFL domain. At Lys63 the chain carries N6-acetyllysine; alternate. At Lys63 the chain carries N6-succinyllysine; alternate. N6-succinyllysine is present on Lys107. An N6-acetyllysine; alternate modification is found at Lys117. Lys117 is subject to N6-succinyllysine; alternate. Position 124 is an N6-succinyllysine (Lys124). Lys195 carries the post-translational modification N6-acetyllysine; alternate. At Lys195 the chain carries N6-succinyllysine; alternate. Cys419 functions as the S-acetylcysteine intermediate in the catalytic mechanism. The active-site Cysteine radical intermediate is the Cys420. Lys454 bears the N6-acetyllysine; alternate mark. The residue at position 454 (Lys454) is an N6-succinyllysine; alternate. An N6-succinyllysine modification is found at Lys467. N6-acetyllysine occurs at positions 541 and 591. A Glycine radical domain is found at 632 to 760 (PGANPMHGRD…VITRTFTQSM (129 aa)). Lys654 bears the N6-succinyllysine mark. Residue Gly735 is modified to Glycine radical.

Belongs to the glycyl radical enzyme (GRE) family. PFL subfamily. In terms of assembly, homodimer. Interacts specifically with FocA.

Its subcellular location is the cytoplasm. The enzyme catalyses formate + acetyl-CoA = pyruvate + CoA. Its pathway is fermentation; pyruvate fermentation; formate from pyruvate: step 1/1. In terms of biological role, catalyzes the conversion of pyruvate to formate and acetyl-CoA. In addition, may be involved in the control of the activity of the formate channel FocA, via direct interaction with FocA. This chain is Formate acetyltransferase 1 (pflB), found in Escherichia coli (strain K12).